The sequence spans 294 residues: Shikimate dehydrogenase (NADP(+)) (294 aa).

Residues 22-24 (SLS) and Ser-69 contribute to the shikimate site. Lys-73 acts as the Proton acceptor in catalysis. 2 residues coordinate shikimate: Asn-94 and Asp-111. Residues 135–139 (GAGGA) and Leu-236 each bind NADP(+). Tyr-238 is a binding site for shikimate. An NADP(+)-binding site is contributed by Gly-260.

The protein belongs to the shikimate dehydrogenase family. As to quaternary structure, homodimer.

The catalysed reaction is shikimate + NADP(+) = 3-dehydroshikimate + NADPH + H(+). It participates in metabolic intermediate biosynthesis; chorismate biosynthesis; chorismate from D-erythrose 4-phosphate and phosphoenolpyruvate: step 4/7. Its function is as follows. Involved in the biosynthesis of the chorismate, which leads to the biosynthesis of aromatic amino acids. Catalyzes the reversible NADPH linked reduction of 3-dehydroshikimate (DHSA) to yield shikimate (SA). The chain is Shikimate dehydrogenase (NADP(+)) from Streptococcus equi subsp. zooepidemicus (strain H70).